Here is a 395-residue protein sequence, read N- to C-terminus: Tyrosine--tRNA ligase 2 (395 aa).

A 'HIGH' region motif is present at residues P42–H51. The 'KMSKS' region motif lies at K226–S230. An ATP-binding site is contributed by K229. Positions I334–I394 constitute an S4 RNA-binding domain.

It belongs to the class-I aminoacyl-tRNA synthetase family. TyrS type 2 subfamily. Homodimer.

The protein localises to the cytoplasm. The catalysed reaction is tRNA(Tyr) + L-tyrosine + ATP = L-tyrosyl-tRNA(Tyr) + AMP + diphosphate + H(+). Its function is as follows. Catalyzes the attachment of tyrosine to tRNA(Tyr) in a two-step reaction: tyrosine is first activated by ATP to form Tyr-AMP and then transferred to the acceptor end of tRNA(Tyr). The polypeptide is Tyrosine--tRNA ligase 2 (Vibrio cholerae serotype O1 (strain ATCC 39315 / El Tor Inaba N16961)).